Here is a 404-residue protein sequence, read N- to C-terminus: LL-diaminopimelate aminotransferase (404 aa).

Substrate-binding residues include tyrosine 15 and glycine 42. Residues tyrosine 72, 108–109 (AK), tyrosine 132, asparagine 188, tyrosine 219, and 247–249 (SFS) contribute to the pyridoxal 5'-phosphate site. Lysine 109, tyrosine 132, and asparagine 188 together coordinate substrate. Residue lysine 250 is modified to N6-(pyridoxal phosphate)lysine. 2 residues coordinate pyridoxal 5'-phosphate: arginine 258 and asparagine 288. Positions 288 and 384 each coordinate substrate.

It belongs to the class-I pyridoxal-phosphate-dependent aminotransferase family. LL-diaminopimelate aminotransferase subfamily. As to quaternary structure, homodimer. Requires pyridoxal 5'-phosphate as cofactor.

It catalyses the reaction (2S,6S)-2,6-diaminopimelate + 2-oxoglutarate = (S)-2,3,4,5-tetrahydrodipicolinate + L-glutamate + H2O + H(+). It functions in the pathway amino-acid biosynthesis; L-lysine biosynthesis via DAP pathway; LL-2,6-diaminopimelate from (S)-tetrahydrodipicolinate (aminotransferase route): step 1/1. In terms of biological role, involved in the synthesis of meso-diaminopimelate (m-DAP or DL-DAP), required for both lysine and peptidoglycan biosynthesis. Catalyzes the direct conversion of tetrahydrodipicolinate to LL-diaminopimelate. The sequence is that of LL-diaminopimelate aminotransferase from Agathobacter rectalis (strain ATCC 33656 / DSM 3377 / JCM 17463 / KCTC 5835 / VPI 0990) (Eubacterium rectale).